The primary structure comprises 114 residues: Non-specific lipid-transfer protein 2 (114 aa).

An N-terminal signal peptide occupies residues 1–23; it reads MEMVNKIACFVLLCMVVVAPHAE. Cystine bridges form between Cys-27/Cys-73, Cys-37/Cys-50, Cys-51/Cys-96, and Cys-71/Cys-110.

This sequence belongs to the plant LTP family.

In terms of biological role, plant non-specific lipid-transfer proteins transfer phospholipids as well as galactolipids across membranes. May play a role in wax or cutin deposition in the cell walls of expanding epidermal cells and certain secretory tissues. In Solanum pennellii (Tomato), this protein is Non-specific lipid-transfer protein 2 (LTP2).